We begin with the raw amino-acid sequence, 310 residues long: Malate dehydrogenase (310 aa).

NAD(+) contacts are provided by residues 7–12 and D32; that span reads GAGNVG. 2 residues coordinate substrate: R81 and R87. NAD(+)-binding positions include N94 and 117-119; that span reads VSN. The substrate site is built by N119 and R150. H174 serves as the catalytic Proton acceptor.

It belongs to the LDH/MDH superfamily. MDH type 3 family. As to quaternary structure, homotetramer; arranged as a dimer of dimers.

The catalysed reaction is (S)-malate + NAD(+) = oxaloacetate + NADH + H(+). Catalyzes the reversible oxidation of malate to oxaloacetate. In Chlorobaculum parvum (strain DSM 263 / NCIMB 8327) (Chlorobium vibrioforme subsp. thiosulfatophilum), this protein is Malate dehydrogenase.